The chain runs to 79 residues: Conotoxin Vi6.1 (79 aa).

Positions 1-22 (MKLTCVLIITVLFLTASQLITA) are cleaved as a signal peptide. The propeptide occupies 23–47 (DYSRDQRQYRAVRLGDEMRNFKGAR). Disulfide bonds link cysteine 49/cysteine 62, cysteine 56/cysteine 67, and cysteine 61/cysteine 77. Proline 60 and proline 63 each carry 4-hydroxyproline.

Expressed by the venom duct.

The protein localises to the secreted. Ion channel inhibitor that inhibits the increase in intracellular calcium upon depolarization in DRG neurons. In vivo, both intraperitoneal and intracranial injections into mice induce hyperactivity. The polypeptide is Conotoxin Vi6.1 (Conus virgo (Virgin cone)).